We begin with the raw amino-acid sequence, 87 residues long: Large ribosomal subunit protein bL31B (87 aa).

This sequence belongs to the bacterial ribosomal protein bL31 family. Type B subfamily. Part of the 50S ribosomal subunit.

The chain is Large ribosomal subunit protein bL31B from Shigella boydii serotype 4 (strain Sb227).